The following is a 227-amino-acid chain: Fibrillarin-like rRNA/tRNA 2'-O-methyltransferase (227 aa).

Residues Thr86–Thr87, Glu105–Phe106, Asp130–Ala131, and Asp150–Gln153 contribute to the S-adenosyl-L-methionine site.

This sequence belongs to the methyltransferase superfamily. Fibrillarin family. As to quaternary structure, interacts with nop5. Component of box C/D small ribonucleoprotein (sRNP) particles that contain rpl7ae, FlpA and nop5, plus a guide RNA. These sRNP particles form homodimers, giving rise to an asymmetric holoenzyme.

Functionally, involved in pre-rRNA and tRNA processing. Utilizes the methyl donor S-adenosyl-L-methionine to catalyze the site-specific 2'-hydroxyl methylation of ribose moieties in rRNA and tRNA. Site specificity is provided by a guide RNA that base pairs with the substrate. Methylation occurs at a characteristic distance from the sequence involved in base pairing with the guide RNA. This chain is Fibrillarin-like rRNA/tRNA 2'-O-methyltransferase, found in Pyrococcus furiosus (strain ATCC 43587 / DSM 3638 / JCM 8422 / Vc1).